Consider the following 196-residue polypeptide: MTSKQYSVKLTSDFDNPRWIGRHKHMFNFLDVNHNGKISLDEMVYKASDIVINNLGATPEQAKRHKDAVEAFFGGAGMKYGVETDWPAYIEGWKKLATDELEKYAKNEPTLIRIWGDALFDIVDKDQNGAITLDEWKAYTKAAGIIQSSEDCEETFRVCDIDESGQLDVDEMTRQHLGFWYTMDPACEKLYGGAVP.

A propeptide spanning residues 1 to 7 is cleaved from the precursor; sequence MTSKQYS. EF-hand domains lie at 18–53, 54–108, 117–146, and 147–182; these read RWIG…IVIN, NLGA…AKNE, DALF…AGII, and QSSE…FWYT. Residues D31, N33, N35, K37, and E42 each coordinate Ca(2+). 3 may interact with the chromophore regions span residues 47 to 57, 62 to 72, and 107 to 117; these read ASDIVINNLGA, AKRHKDAVEAF, and NEPTLIRIWGD. 9 residues coordinate Ca(2+): D124, D126, N128, E135, D160, D162, S164, Q166, and E171.

This sequence belongs to the aequorin family. In terms of processing, the reduction of the disulfide bond is necessary to regenerate aequorin from apoaequorin.

Functionally, ca(2+)-dependent bioluminescence photoprotein. Displays an emission peak at 470 nm (blue light). Trace amounts of calcium ion trigger the intramolecular oxidation of the chromophore, coelenterazine into coelenteramide and CO(2) with the concomitant emission of light. The chain is Aequorin-2 from Aequorea victoria (Water jellyfish).